The following is a 460-amino-acid chain: tRNA (guanine(10)-N(2))-methyltransferase TRMT11 (460 aa).

A2 is modified (N-acetylalanine).

It belongs to the class I-like SAM-binding methyltransferase superfamily. TRM11 methyltransferase family. Part of the heterodimeric TRMT11-TRM112 methyltransferase complex; this complex forms an active tRNA methyltransferase, where TRMT112 acts as an activator of the catalytic subunit TRMT11.

The protein localises to the cytoplasm. It carries out the reaction guanosine(10) in tRNA + S-adenosyl-L-methionine = N(2)-methylguanosine(10) in tRNA + S-adenosyl-L-homocysteine + H(+). In terms of biological role, catalytic subunit of the TRMT11-TRM112 methyltransferase complex, that specifically mediates the S-adenosyl-L-methionine-dependent N(2)-methylation of guanosine nucleotide at position 10 (m2G10) in tRNAs. This is one of the major tRNA (guanine-N(2))-methyltransferases. This is tRNA (guanine(10)-N(2))-methyltransferase TRMT11 from Mus musculus (Mouse).